Here is a 642-residue protein sequence, read N- to C-terminus: Threonine--tRNA ligase (642 aa).

The TGS domain maps to 1–61; that stretch reads MPVITLPDGS…ENDAQLSIIT (61 aa). Residues 243 to 534 are catalytic; that stretch reads DHRKIGKQLD…LTEEFAGFFP (292 aa). Lysine 286 is subject to N6-acetyllysine. Cysteine 334, histidine 385, and histidine 511 together coordinate Zn(2+).

It belongs to the class-II aminoacyl-tRNA synthetase family. As to quaternary structure, homodimer. Requires Zn(2+) as cofactor.

Its subcellular location is the cytoplasm. It carries out the reaction tRNA(Thr) + L-threonine + ATP = L-threonyl-tRNA(Thr) + AMP + diphosphate + H(+). Functionally, catalyzes the attachment of threonine to tRNA(Thr) in a two-step reaction: L-threonine is first activated by ATP to form Thr-AMP and then transferred to the acceptor end of tRNA(Thr). Also edits incorrectly charged L-seryl-tRNA(Thr). The polypeptide is Threonine--tRNA ligase (Shigella boydii serotype 18 (strain CDC 3083-94 / BS512)).